The chain runs to 721 residues: Polyribonucleotide nucleotidyltransferase (721 aa).

Mg(2+)-binding residues include aspartate 486 and aspartate 492. The region spanning proline 553–isoleucine 612 is the KH domain. One can recognise an S1 motif domain in the interval glycine 622–valine 716.

This sequence belongs to the polyribonucleotide nucleotidyltransferase family. Mg(2+) serves as cofactor.

It is found in the cytoplasm. It carries out the reaction RNA(n+1) + phosphate = RNA(n) + a ribonucleoside 5'-diphosphate. In terms of biological role, involved in mRNA degradation. Catalyzes the phosphorolysis of single-stranded polyribonucleotides processively in the 3'- to 5'-direction. This Borrelia garinii subsp. bavariensis (strain ATCC BAA-2496 / DSM 23469 / PBi) (Borreliella bavariensis) protein is Polyribonucleotide nucleotidyltransferase.